Here is a 52-residue protein sequence, read N- to C-terminus: Ribosome biogenesis protein Nop10 (52 aa).

Belongs to the NOP10 family.

Involved in ribosome biogenesis; more specifically in 18S rRNA pseudouridylation and in cleavage of pre-rRNA. The chain is Ribosome biogenesis protein Nop10 from Methanococcus vannielii (strain ATCC 35089 / DSM 1224 / JCM 13029 / OCM 148 / SB).